The chain runs to 573 residues: MSRVLSRRDIADRIAKGQTIVIYEDSVLNLDKWIKFHPGGDKSIYHMIGRDATDEMNAYHDDQTITKFKIWKIGRIDYPWENMLPPIQGGRFSKIDERDDIGDYDINLTSKWRSVDESNQYTKIPKNDRLASEAEVKIYPKIPQGVVPSLDLKEAYEKKIVVDPAIVSENYDNERVYEDLTNFPSLDVKNQEWIASEYRKLHGEITAAGLYQCNYVRYLREFLRIGTLFGISFYLLSLKWFAISAICLGFAWQQLVFIAHDAGHISITHNYQVDNIIGMTVASWIGGLSLGWWKRNHDVHHLVTNDPVHDPDIQHLPFFAVSTRLFHNVYSTYYDKFLWFDKFAQKVVPIQHYLYYPILCFGRFNLYRLSWMHVLLGQGPRRGKAAWFRYYELAELSFFNYWFFYLIIYKQMPTNAERFKYVMISHIATMIVHVQITLSHFAMSTSDLGVTESFPMRQLRTSMDVDCPRWLDFFHGGLQFQVIHHLFPRLPRHNLKDAQSLVIKFCDKVGIKYSIYGFAAGNDVVISHLQQIAQQAHTMLECAKTMKKEATDTEFHTNKHVLAANVNEKRKQE.

In terms of domain architecture, Cytochrome b5 heme-binding spans 2–77 (SRVLSRRDIA…FKIWKIGRID (76 aa)). 2 residues coordinate heme: His-37 and His-60. The helical transmembrane segment at 228–248 (LFGISFYLLSLKWFAISAICL) threads the bilayer. A Histidine box-1 motif is present at residues 260-264 (HDAGH). A helical transmembrane segment spans residues 273 to 293 (VDNIIGMTVASWIGGLSLGWW). The Histidine box-2 motif lies at 297–301 (HDVHH). 3 helical membrane passes run 353 to 372 (YLYY…LSWM), 393 to 413 (LAEL…KQMP), and 422 to 442 (VMIS…SHFA). The short motif at 481–485 (QVIHH) is the Histidine box-3 element.

It belongs to the fatty acid desaturase type 1 family.

Its subcellular location is the membrane. The catalysed reaction is an N-acylsphing-4-enine + 2 Fe(II)-[cytochrome b5] + O2 + 2 H(+) = a (4E,8E)-4-sphinga-4,8-dienine ceramide + 2 Fe(III)-[cytochrome b5] + 2 H2O. It participates in lipid metabolism; sphingolipid metabolism. In terms of biological role, delta(8)-fatty-acid desaturase which introduces a double bond at the 8-position in the long-chain base (LCB) of ceramides. Required for the formation of the di-unsaturated sphingoid base (E,E)-sphinga-4,8-dienine during glucosylceramide (GluCer) biosynthesis. The chain is Delta 8-(E)-sphingolipid desaturase from Kluyveromyces lactis (Yeast).